Consider the following 255-residue polypeptide: tRNA (guanine-N(1)-)-methyltransferase (255 aa).

Residues G113 and 133–138 (IGDYVL) each bind S-adenosyl-L-methionine.

This sequence belongs to the RNA methyltransferase TrmD family. In terms of assembly, homodimer.

The protein resides in the cytoplasm. It catalyses the reaction guanosine(37) in tRNA + S-adenosyl-L-methionine = N(1)-methylguanosine(37) in tRNA + S-adenosyl-L-homocysteine + H(+). In terms of biological role, specifically methylates guanosine-37 in various tRNAs. This is tRNA (guanine-N(1)-)-methyltransferase from Salmonella agona (strain SL483).